The sequence spans 398 residues: Meiosis-specific protein SPO11 (398 aa).

A Topo IIA-type catalytic domain is found at 40-175; it reads CSNADVLAHI…LNIIPAQKGL (136 aa). The active-site O-(5'-phospho-DNA)-tyrosine intermediate is Tyr-135. Positions 233 and 288 each coordinate Mg(2+).

The protein belongs to the TOP6A family. Requires Mg(2+) as cofactor.

Its subcellular location is the nucleus. It is found in the chromosome. It catalyses the reaction ATP-dependent breakage, passage and rejoining of double-stranded DNA.. In terms of biological role, required for meiotic recombination. Mediates DNA cleavage that forms the double-strand breaks (DSB) that initiate meiotic recombination. The action of SPO11 is important in setting off a regulatory chain of events encompassing 5' to 3' resection. When there are no SPO11-DSBs, resection of a site specific VDE-DSB takes place but it is faster than in wild-type meiosis and increases the risk of uncovering flanking homology. This Saccharomyces cerevisiae (strain ATCC 204508 / S288c) (Baker's yeast) protein is Meiosis-specific protein SPO11 (SPO11).